We begin with the raw amino-acid sequence, 397 residues long: Mitochondrial inner membrane magnesium transporter LPE10 (397 aa).

A mitochondrion-targeting transit peptide spans 1 to 37 (MLLVNRAITLNLVKRCCWRSTMFMTPKRFLGTSEEES). A helical membrane pass occupies residues 316 to 336 (LMLLGIRFSIGMLSLGGPIFI). The YGMN motif lies at 340 to 343 (YGMN). The chain crosses the membrane as a helical span at residues 354 to 374 (GFIAASAIGMISLGALYFYSI).

Belongs to the CorA metal ion transporter (MIT) (TC 1.A.35) family. In terms of assembly, forms homooligomers. Interacts with MRS2.

The protein resides in the mitochondrion inner membrane. Its function is as follows. Mitochondrial inner membrane magnesium transporter required for mitochondrial magnesium homeostasis. Modulates the conductance of the MRS2 channel. Involved in the splicing of mRNA group II introns in mitochondria by affecting mitochondrial magnesium concentrations, which are critical for group II intron splicing. The chain is Mitochondrial inner membrane magnesium transporter LPE10 (LPE10) from Candida glabrata (strain ATCC 2001 / BCRC 20586 / JCM 3761 / NBRC 0622 / NRRL Y-65 / CBS 138) (Yeast).